The primary structure comprises 361 residues: Probable mannose-1-phosphate guanylyltransferase 3 (361 aa).

Positions 6 and 7 each coordinate GDP-alpha-D-mannose. Diphosphate is bound by residues glycine 9, glycine 11, threonine 12, arginine 13, and lysine 23. Residues glycine 85, asparagine 109, aspartate 111, glycine 146, and asparagine 173 each coordinate GDP-alpha-D-mannose.

It belongs to the transferase hexapeptide repeat family.

It carries out the reaction alpha-D-mannose 1-phosphate + GTP + H(+) = GDP-alpha-D-mannose + diphosphate. It participates in nucleotide-sugar biosynthesis; GDP-alpha-D-mannose biosynthesis; GDP-alpha-D-mannose from alpha-D-mannose 1-phosphate (GTP route): step 1/1. Its function is as follows. Catalyzes a reaction of the Smirnoff-Wheeler pathway, the major route to ascorbate biosynthesis in plants. In Oryza sativa subsp. japonica (Rice), this protein is Probable mannose-1-phosphate guanylyltransferase 3.